A 390-amino-acid chain; its full sequence is Queuine tRNA-ribosyltransferase (390 aa).

Catalysis depends on Asp-92, which acts as the Proton acceptor. Substrate contacts are provided by residues 92–96 (DSGGF), Asp-146, Gln-195, and Gly-222. Positions 253 to 259 (GVGTPED) are RNA binding. Asp-272 acts as the Nucleophile in catalysis. Residues 277–281 (TRNAR) form an RNA binding; important for wobble base 34 recognition region. Residues Cys-310, Cys-312, Cys-315, and His-354 each coordinate Zn(2+).

Belongs to the queuine tRNA-ribosyltransferase family. As to quaternary structure, homodimer. Within each dimer, one monomer is responsible for RNA recognition and catalysis, while the other monomer binds to the replacement base PreQ1. The cofactor is Zn(2+).

It carries out the reaction 7-aminomethyl-7-carbaguanine + guanosine(34) in tRNA = 7-aminomethyl-7-carbaguanosine(34) in tRNA + guanine. It participates in tRNA modification; tRNA-queuosine biosynthesis. In terms of biological role, catalyzes the base-exchange of a guanine (G) residue with the queuine precursor 7-aminomethyl-7-deazaguanine (PreQ1) at position 34 (anticodon wobble position) in tRNAs with GU(N) anticodons (tRNA-Asp, -Asn, -His and -Tyr). Catalysis occurs through a double-displacement mechanism. The nucleophile active site attacks the C1' of nucleotide 34 to detach the guanine base from the RNA, forming a covalent enzyme-RNA intermediate. The proton acceptor active site deprotonates the incoming PreQ1, allowing a nucleophilic attack on the C1' of the ribose to form the product. After dissociation, two additional enzymatic reactions on the tRNA convert PreQ1 to queuine (Q), resulting in the hypermodified nucleoside queuosine (7-(((4,5-cis-dihydroxy-2-cyclopenten-1-yl)amino)methyl)-7-deazaguanosine). This is Queuine tRNA-ribosyltransferase from Delftia acidovorans (strain DSM 14801 / SPH-1).